Here is a 1343-residue protein sequence, read N- to C-terminus: DNA-directed RNA polymerase subunit beta (1343 aa).

It belongs to the RNA polymerase beta chain family. The RNAP catalytic core consists of 2 alpha, 1 beta, 1 beta' and 1 omega subunit. When a sigma factor is associated with the core the holoenzyme is formed, which can initiate transcription.

The enzyme catalyses RNA(n) + a ribonucleoside 5'-triphosphate = RNA(n+1) + diphosphate. In terms of biological role, DNA-dependent RNA polymerase catalyzes the transcription of DNA into RNA using the four ribonucleoside triphosphates as substrates. This chain is DNA-directed RNA polymerase subunit beta, found in Shewanella sediminis (strain HAW-EB3).